A 641-amino-acid chain; its full sequence is Threonine--tRNA ligase (641 aa).

A TGS domain is found at 1 to 61; the sequence is MPAITLPDGS…ADDASVRFIT (61 aa). Residues 243–536 form a catalytic region; it reads DHRRIGREMD…LIEQHAGRFP (294 aa). Residues cysteine 336, histidine 387, and histidine 513 each coordinate Zn(2+).

This sequence belongs to the class-II aminoacyl-tRNA synthetase family. Homodimer. The cofactor is Zn(2+).

The protein resides in the cytoplasm. It catalyses the reaction tRNA(Thr) + L-threonine + ATP = L-threonyl-tRNA(Thr) + AMP + diphosphate + H(+). In terms of biological role, catalyzes the attachment of threonine to tRNA(Thr) in a two-step reaction: L-threonine is first activated by ATP to form Thr-AMP and then transferred to the acceptor end of tRNA(Thr). Also edits incorrectly charged L-seryl-tRNA(Thr). The polypeptide is Threonine--tRNA ligase (Gluconacetobacter diazotrophicus (strain ATCC 49037 / DSM 5601 / CCUG 37298 / CIP 103539 / LMG 7603 / PAl5)).